A 336-amino-acid chain; its full sequence is Tryptophan--tRNA ligase (336 aa).

ATP is bound by residues 13–15 (QPS) and 21–22 (GN). Residues 14–22 (PSGNLTIGN) carry the 'HIGH' region motif. Asp140 contacts L-tryptophan. ATP-binding positions include 152–154 (GQD), Ile191, and 200–204 (KMSKS). The 'KMSKS' region signature appears at 200-204 (KMSKS).

The protein belongs to the class-I aminoacyl-tRNA synthetase family. Homodimer.

The protein localises to the cytoplasm. The enzyme catalyses tRNA(Trp) + L-tryptophan + ATP = L-tryptophyl-tRNA(Trp) + AMP + diphosphate + H(+). In terms of biological role, catalyzes the attachment of tryptophan to tRNA(Trp). This is Tryptophan--tRNA ligase from Buchnera aphidicola subsp. Schizaphis graminum (strain Sg).